We begin with the raw amino-acid sequence, 196 residues long: Peptidyl-tRNA hydrolase (196 aa).

Y14 contributes to the tRNA binding site. H19 acts as the Proton acceptor in catalysis. 3 residues coordinate tRNA: F64, N66, and N112.

Belongs to the PTH family. In terms of assembly, monomer.

It localises to the cytoplasm. It carries out the reaction an N-acyl-L-alpha-aminoacyl-tRNA + H2O = an N-acyl-L-amino acid + a tRNA + H(+). Its function is as follows. Hydrolyzes ribosome-free peptidyl-tRNAs (with 1 or more amino acids incorporated), which drop off the ribosome during protein synthesis, or as a result of ribosome stalling. Functionally, catalyzes the release of premature peptidyl moieties from peptidyl-tRNA molecules trapped in stalled 50S ribosomal subunits, and thus maintains levels of free tRNAs and 50S ribosomes. The polypeptide is Peptidyl-tRNA hydrolase (Solibacter usitatus (strain Ellin6076)).